A 302-amino-acid chain; its full sequence is Sulfate adenylyltransferase subunit 2 (302 aa).

Belongs to the PAPS reductase family. CysD subfamily. In terms of assembly, heterodimer composed of CysD, the smaller subunit, and CysN.

It catalyses the reaction sulfate + ATP + H(+) = adenosine 5'-phosphosulfate + diphosphate. It participates in sulfur metabolism; hydrogen sulfide biosynthesis; sulfite from sulfate: step 1/3. In terms of biological role, with CysN forms the ATP sulfurylase (ATPS) that catalyzes the adenylation of sulfate producing adenosine 5'-phosphosulfate (APS) and diphosphate, the first enzymatic step in sulfur assimilation pathway. APS synthesis involves the formation of a high-energy phosphoric-sulfuric acid anhydride bond driven by GTP hydrolysis by CysN coupled to ATP hydrolysis by CysD. The sequence is that of Sulfate adenylyltransferase subunit 2 from Photorhabdus laumondii subsp. laumondii (strain DSM 15139 / CIP 105565 / TT01) (Photorhabdus luminescens subsp. laumondii).